A 634-amino-acid chain; its full sequence is MKTSDILLLPTVLLTFLFHNCFAQAEPDLVVATRLGRVQGTRLPVPDRSHVIAFLGIPYAEPPIGKRRFKRAEPKKPWNNVFEAKEFSNACYQFVDTSYPGFPGIEMWNPNRVMSEDCLYLNVWVPPTPRPQNLTVMVWIYGGGFYSGSSSLDVYDGRYLAYTEKVVVVSMNYRVGAFGFLALNGSSDAPGNVGLYDQRLALQWVQENIHFFGGNPKQVTIFGESAGAASVGMHVLSPDSRPLFTRAILQSGVPNTPWATVTFDEARRRTTKLGKLVGCTWGNDTELIDCLRNKHPQELIDQEWQVLPWSSLFRFSFVPVVDGVFFPDTPDAMISSGNFKYTQILLGVNQDEGSYFLLYGAPGFSKDNESLISREDFLESVKMGVPHANDIGLEAVILQYTDWMDENNGQKNRDAMDDIVGDQNVICPLQHFAKSYAQYAALHAQSSAAAPGTLGWGNSGPTGYNSGNSHGAVYLYLFDHRASNLAWPEWMGVIHGYEIEFVFGLPLEKRLNYTAEEEKLSRRIMRYWANFARTGNPNVNTDGTMDSRRRWPQFSANEQKHVGLNTEPMKVHKGLRTQFCALWNRFLPRLLNITDNIDDVERQWKVEFHRWSSYMMHWKSQFDHYSKQERCTDL.

An N-terminal signal peptide occupies residues 1 to 23; the sequence is MKTSDILLLPTVLLTFLFHNCFA. An intrachain disulfide couples cysteine 91 to cysteine 118. 2 N-linked (GlcNAc...) asparagine glycosylation sites follow: asparagine 133 and asparagine 184. Serine 225 acts as the Acyl-ester intermediate in catalysis. A disulfide bridge connects residues cysteine 279 and cysteine 290. A glycan (N-linked (GlcNAc...) asparagine) is linked at asparagine 283. Glutamate 352 functions as the Charge relay system in the catalytic mechanism. A glycan (N-linked (GlcNAc...) asparagine) is linked at asparagine 368. Cysteine 427 and cysteine 580 are joined by a disulfide. The active-site Charge relay system is the histidine 495. Asparagine 512 and asparagine 592 each carry an N-linked (GlcNAc...) asparagine glycan.

The protein belongs to the type-B carboxylesterase/lipase family. As to quaternary structure, dimers and collagen-tailed forms, in which catalytic tetramers are associated with anchoring proteins that attach them to the basal lamina or to cell membranes. In the collagen-tailed forms, subunits are associated with a specific collagen, COLQ, which triggers the formation of isoform T tetramers from dimers.

Its subcellular location is the synapse. The protein resides in the secreted. The protein localises to the cell membrane. It catalyses the reaction acetylcholine + H2O = choline + acetate + H(+). Functionally, terminates signal transduction at the neuromuscular junction by rapid hydrolysis of the acetylcholine released into the synaptic cleft. This chain is Acetylcholinesterase (ache), found in Danio rerio (Zebrafish).